A 392-amino-acid polypeptide reads, in one-letter code: Protein DJ-1 homolog A (392 aa).

2 consecutive PfpI endopeptidase domains span residues 6-174 and 212-378; these read KTVL…EQLF and PQIL…EKFY.

This sequence belongs to the peptidase C56 family. Homodimer. Interacts with CSD1 and GPX2.

It localises to the cytoplasm. It is found in the cytosol. Its subcellular location is the nucleus. Functionally, involved in oxidative stress response. Confers protection against diverse stresses by binding both CSD1 and GPX2 and mediating the cytosolic activation of the Cu-Zn-dependent superoxide dismutase activity of CSD1. This Arabidopsis thaliana (Mouse-ear cress) protein is Protein DJ-1 homolog A (DJ1A).